Consider the following 73-residue polypeptide: MAKKDGVIEIEGQVIEPLPNAMFRVELANGHKVLAHISGKMRMHYIRILPGDRVVVELSPYDLNRGRIVYRYR.

An S1-like domain is found at 1–73 (MAKKDGVIEI…NRGRIVYRYR (73 aa)).

This sequence belongs to the IF-1 family. As to quaternary structure, component of the 30S ribosomal translation pre-initiation complex which assembles on the 30S ribosome in the order IF-2 and IF-3, IF-1 and N-formylmethionyl-tRNA(fMet); mRNA recruitment can occur at any time during PIC assembly.

It localises to the cytoplasm. Functionally, one of the essential components for the initiation of protein synthesis. Stabilizes the binding of IF-2 and IF-3 on the 30S subunit to which N-formylmethionyl-tRNA(fMet) subsequently binds. Helps modulate mRNA selection, yielding the 30S pre-initiation complex (PIC). Upon addition of the 50S ribosomal subunit IF-1, IF-2 and IF-3 are released leaving the mature 70S translation initiation complex. This is Translation initiation factor IF-1 from Acidothermus cellulolyticus (strain ATCC 43068 / DSM 8971 / 11B).